The chain runs to 327 residues: Flotillin-like protein FloA (327 aa).

The next 2 helical transmembrane spans lie at 8–28 (VLLITGGILIFLAIFFTLVPI) and 29–49 (PLWISSLAAGVRVSIFTLVGM).

This sequence belongs to the flotillin-like FloA family. Homooligomerizes.

It localises to the cell membrane. Its subcellular location is the membrane raft. In terms of biological role, found in functional membrane microdomains (FMM) that may be equivalent to eukaryotic membrane rafts. FMMs are highly dynamic and increase in number as cells age. Flotillins are thought to be important factors in membrane fluidity. The sequence is that of Flotillin-like protein FloA from Exiguobacterium sibiricum (strain DSM 17290 / CCUG 55495 / CIP 109462 / JCM 13490 / 255-15).